We begin with the raw amino-acid sequence, 329 residues long: MAEVPIAVPVSIRDEVVPSRKRVKLPPWLEIAKPRLIPLLLATTLGGMALSESWPLPLPRLACTLGGGALAAAAAGVLNCLWEEQLDGQMQRTSGRALPSGRLSGSQAFLIAVALACGASLLLVAGVNCLAAGLSLLGLCSYVLLYTIVLKPRTTRNIVIGGVAGAIPPLVGAAAATGHVGLGGWWLFGLVMLWTPAHFWALALLLTDDYRSVGIPMLPVVKGPEVTGRAINRYAYATVAASLLGVLTLPSGGLFYGLMVLPFNGRLLQMAQRLGELPDDKQRAKGLFRWSILYLFGICLLLLLARTTMAADFSNQLISLLTLPPASAF.

A run of 7 helical transmembrane segments spans residues 61–81 (LACT…LNCL), 108–128 (AFLI…AGVN), 130–150 (LAAG…TIVL), 158–178 (IVIG…AATG), 186–206 (WLFG…ALLL), 243–263 (LLGV…VLPF), and 284–304 (AKGL…LLLL).

Belongs to the UbiA prenyltransferase family. Protoheme IX farnesyltransferase subfamily.

It is found in the cell inner membrane. The catalysed reaction is heme b + (2E,6E)-farnesyl diphosphate + H2O = Fe(II)-heme o + diphosphate. It functions in the pathway porphyrin-containing compound metabolism; heme O biosynthesis; heme O from protoheme: step 1/1. Converts heme B (protoheme IX) to heme O by substitution of the vinyl group on carbon 2 of heme B porphyrin ring with a hydroxyethyl farnesyl side group. This is Protoheme IX farnesyltransferase from Synechococcus sp. (strain RCC307).